The sequence spans 317 residues: Methionyl-tRNA formyltransferase (317 aa).

Position 112–115 (112–115) interacts with (6S)-5,6,7,8-tetrahydrofolate; sequence SLLP.

It belongs to the Fmt family.

The catalysed reaction is L-methionyl-tRNA(fMet) + (6R)-10-formyltetrahydrofolate = N-formyl-L-methionyl-tRNA(fMet) + (6S)-5,6,7,8-tetrahydrofolate + H(+). In terms of biological role, attaches a formyl group to the free amino group of methionyl-tRNA(fMet). The formyl group appears to play a dual role in the initiator identity of N-formylmethionyl-tRNA by promoting its recognition by IF2 and preventing the misappropriation of this tRNA by the elongation apparatus. This is Methionyl-tRNA formyltransferase from Mycoplasma capricolum subsp. capricolum (strain California kid / ATCC 27343 / NCTC 10154).